The chain runs to 241 residues: 2,3,4,5-tetrahydropyridine-2,6-dicarboxylate N-acetyltransferase (241 aa).

Belongs to the transferase hexapeptide repeat family. DapH subfamily.

It carries out the reaction (S)-2,3,4,5-tetrahydrodipicolinate + acetyl-CoA + H2O = L-2-acetamido-6-oxoheptanedioate + CoA. The protein operates within amino-acid biosynthesis; L-lysine biosynthesis via DAP pathway; LL-2,6-diaminopimelate from (S)-tetrahydrodipicolinate (acetylase route): step 1/3. Its function is as follows. Catalyzes the transfer of an acetyl group from acetyl-CoA to tetrahydrodipicolinate. This is 2,3,4,5-tetrahydropyridine-2,6-dicarboxylate N-acetyltransferase from Thermoanaerobacter pseudethanolicus (strain ATCC 33223 / 39E) (Clostridium thermohydrosulfuricum).